The following is a 55-amino-acid chain: Large ribosomal subunit protein bL33 (55 aa).

This sequence belongs to the bacterial ribosomal protein bL33 family.

The polypeptide is Large ribosomal subunit protein bL33 (Acidiphilium cryptum (strain JF-5)).